The following is a 560-amino-acid chain: NAD-dependent malic enzyme (560 aa).

Tyrosine 100 serves as the catalytic Proton donor. Arginine 153 is a binding site for NAD(+). Lysine 171 serves as the catalytic Proton acceptor. Glutamate 242, aspartate 243, and aspartate 266 together coordinate a divalent metal cation. NAD(+) is bound by residues aspartate 266 and asparagine 413.

Belongs to the malic enzymes family. Homotetramer. Mg(2+) is required as a cofactor. The cofactor is Mn(2+).

The enzyme catalyses (S)-malate + NAD(+) = pyruvate + CO2 + NADH. It carries out the reaction oxaloacetate + H(+) = pyruvate + CO2. The chain is NAD-dependent malic enzyme from Psychrobacter cryohalolentis (strain ATCC BAA-1226 / DSM 17306 / VKM B-2378 / K5).